The primary structure comprises 1303 residues: DNA-directed RNA polymerase subunit beta (1303 aa).

This sequence belongs to the RNA polymerase beta chain family. As to quaternary structure, the RNAP catalytic core consists of 2 alpha, 1 beta, 1 beta' and 1 omega subunit. When a sigma factor is associated with the core the holoenzyme is formed, which can initiate transcription.

It catalyses the reaction RNA(n) + a ribonucleoside 5'-triphosphate = RNA(n+1) + diphosphate. Its function is as follows. DNA-dependent RNA polymerase catalyzes the transcription of DNA into RNA using the four ribonucleoside triphosphates as substrates. This chain is DNA-directed RNA polymerase subunit beta, found in Chlorobaculum tepidum (strain ATCC 49652 / DSM 12025 / NBRC 103806 / TLS) (Chlorobium tepidum).